Consider the following 446-residue polypeptide: Probable D-serine dehydratase (446 aa).

K116 bears the N6-(pyridoxal phosphate)lysine mark.

This sequence belongs to the serine/threonine dehydratase family. DsdA subfamily. Requires pyridoxal 5'-phosphate as cofactor.

It carries out the reaction D-serine = pyruvate + NH4(+). The chain is Probable D-serine dehydratase from Bacillus cereus (strain ZK / E33L).